The following is a 64-amino-acid chain: MSKQLKITLKKSAIGRPSKQRDTLRGMGLSKINKAVVLKDCTEIRGMINKVSHLVSCEEVEGVE.

Belongs to the universal ribosomal protein uL30 family. As to quaternary structure, part of the 50S ribosomal subunit.

The chain is Large ribosomal subunit protein uL30 from Syntrophus aciditrophicus (strain SB).